The chain runs to 127 residues: Putative truncated L-serine dehydratase YIL168W (127 aa).

An N6-(pyridoxal phosphate)lysine modification is found at Lys39.

This sequence belongs to the serine/threonine dehydratase family. Pyridoxal 5'-phosphate is required as a cofactor.

Its subcellular location is the cytoplasm. It carries out the reaction L-serine = pyruvate + NH4(+). It functions in the pathway carbohydrate biosynthesis; gluconeogenesis. The sequence is that of Putative truncated L-serine dehydratase YIL168W from Saccharomyces cerevisiae (strain ATCC 204508 / S288c) (Baker's yeast).